The following is a 29-amino-acid chain: Cytochrome b6-f complex subunit 8 (29 aa).

Residues 3–23 (ILTLGWVGLLGLFTYSIAMVV) form a helical membrane-spanning segment.

The protein belongs to the PetN family. In terms of assembly, the 4 large subunits of the cytochrome b6-f complex are cytochrome b6, subunit IV (17 kDa polypeptide, PetD), cytochrome f and the Rieske protein, while the 4 small subunits are PetG, PetL, PetM and PetN. The complex functions as a dimer.

The protein localises to the cellular thylakoid membrane. Functionally, component of the cytochrome b6-f complex, which mediates electron transfer between photosystem II (PSII) and photosystem I (PSI), cyclic electron flow around PSI, and state transitions. The chain is Cytochrome b6-f complex subunit 8 from Cyanothece sp. (strain PCC 7425 / ATCC 29141).